The primary structure comprises 104 residues: Iron-sulfur cluster assembly protein CyaY (104 aa).

Belongs to the frataxin family.

Involved in iron-sulfur (Fe-S) cluster assembly. May act as a regulator of Fe-S biogenesis. This is Iron-sulfur cluster assembly protein CyaY from Aeromonas hydrophila subsp. hydrophila (strain ATCC 7966 / DSM 30187 / BCRC 13018 / CCUG 14551 / JCM 1027 / KCTC 2358 / NCIMB 9240 / NCTC 8049).